Consider the following 479-residue polypeptide: Ribosomal RNA small subunit methyltransferase F (479 aa).

S-adenosyl-L-methionine contacts are provided by residues 125–131, Glu-149, Asp-176, and Asp-194; that span reads AAAPGSK. Catalysis depends on Cys-247, which acts as the Nucleophile.

The protein belongs to the class I-like SAM-binding methyltransferase superfamily. RsmB/NOP family.

The protein resides in the cytoplasm. The catalysed reaction is cytidine(1407) in 16S rRNA + S-adenosyl-L-methionine = 5-methylcytidine(1407) in 16S rRNA + S-adenosyl-L-homocysteine + H(+). In terms of biological role, specifically methylates the cytosine at position 1407 (m5C1407) of 16S rRNA. This Escherichia coli O17:K52:H18 (strain UMN026 / ExPEC) protein is Ribosomal RNA small subunit methyltransferase F.